A 224-amino-acid chain; its full sequence is Ribosomal RNA small subunit methyltransferase G (224 aa).

Residues G92, L97, 143–144 (VE), and R156 contribute to the S-adenosyl-L-methionine site.

The protein belongs to the methyltransferase superfamily. RNA methyltransferase RsmG family.

Its subcellular location is the cytoplasm. It carries out the reaction guanosine(527) in 16S rRNA + S-adenosyl-L-methionine = N(7)-methylguanosine(527) in 16S rRNA + S-adenosyl-L-homocysteine. Its function is as follows. Specifically methylates the N7 position of guanine in position 527 of 16S rRNA. This Albidiferax ferrireducens (strain ATCC BAA-621 / DSM 15236 / T118) (Rhodoferax ferrireducens) protein is Ribosomal RNA small subunit methyltransferase G.